Reading from the N-terminus, the 899-residue chain is Solute carrier family 12 member 9 (899 aa).

The Cytoplasmic segment spans residues 1 to 42; the sequence is MANEHSPLLVHGVYSMMGNAEDSRGGSAGTGEASNPKTDPRK. Residues 43–63 traverse the membrane as a helical segment; it reads LNTFFGVMVPTILSMFSIVLF. The Extracellular portion of the chain corresponds to 64 to 78; the sequence is LRTGFVVGHAGLLHG. The helical transmembrane segment at 79–99 threads the bilayer; that stretch reads LLMLFVAYFIISLTILSICAI. Topologically, residues 100–125 are cytoplasmic; that stretch reads STNGAVEGGGAYFMISRSLGPEFGGS. A helical membrane pass occupies residues 126 to 146; sequence IGLMFYLAKVCACGVYVLGLV. The Extracellular portion of the chain corresponds to 147–175; the sequence is EAIMDVFGQDPGSSVAQGLRVLPQGYWYT. A helical transmembrane segment spans residues 176-196; sequence VLYSSVVLLLCMLVCLVGAHI. At 197 to 201 the chain is on the cytoplasmic side; that stretch reads YAKAS. Residues 202-222 form a helical membrane-spanning segment; that stretch reads FLILLVVTVSLISIIISPLIV. Residues 223–269 are Extracellular-facing; the sequence is SPQGFNITHTYGNNHSVTVSPSYTGFNSTTLKNNLGPRYSLDYSTNT. N-linked (GlcNAc...) asparagine glycans are attached at residues Asn228, Asn236, and Asn249. The helical transmembrane segment at 270 to 290 threads the bilayer; that stretch reads MMSFATVFAVMFTSCTGIMAG. At 291–306 the chain is on the cytoplasmic side; it reads ANMSGELKNPSESIPK. The helical transmembrane segment at 307 to 327 threads the bilayer; sequence GTIMAVAYTFTVYVLLYLLLS. Residues 328–350 are Extracellular-facing; that stretch reads STCDRSLLLNDYAVFQRVNVWPP. A helical transmembrane segment spans residues 351 to 371; the sequence is FVTIGVYCASLSAAMCSMIGA. The Cytoplasmic segment spans residues 372–373; the sequence is SR. The helical transmembrane segment at 374 to 394 threads the bilayer; it reads ILHALALDQLFGLPLAPAAVT. Residues 395 to 399 are Extracellular-facing; it reads SSSGN. A helical transmembrane segment spans residues 400–420; the sequence is PWVSVLYTWALVQCTLFAGQL. Asn421 is a topological domain (cytoplasmic). Residues 422–442 traverse the membrane as a helical segment; that stretch reads VIAGIVTVFYLLAYAAVDLAC. Over 443–455 the chain is Extracellular; that stretch reads LALEWASAPNFRP. Residues 456–476 traverse the membrane as a helical segment; that stretch reads TFQFFSWHTCLLGIISCVVMM. Topologically, residues 477-487 are extracellular; it reads FVINPVYSSAS. A helical membrane pass occupies residues 488–510; sequence IVLLLLLLLFLHYRSPTSSWGYI. Over 511-563 the chain is Cytoplasmic; the sequence is SQALIFHQVRKYLLMLDSRKDHVKFWRPQVLLMVSNPRSSCQLICFVNQLKKG. The chain crosses the membrane as a helical span at residues 564–584; that stretch reads GLFVLGHVQIGDLDVLPADPV. Over 585–749 the chain is Extracellular; the sequence is QPQYNFWLSL…NLLTPGSASY (165 aa). The chain crosses the membrane as a helical span at residues 750 to 770; that stretch reads ADVGSLFLLQMACVLNMASGW. The Cytoplasmic portion of the chain corresponds to 771-899; the sequence is RRARLRIFVC…GVTPVTCTEL (129 aa).

It belongs to the SLC12A transporter family.

The protein resides in the cell membrane. It localises to the lysosome membrane. Functionally, seems to correspond to a subunit of a multimeric transport system and thus, additional subunits may be required for its function. May play a role in lysosomal ion flux and osmoregulation. This chain is Solute carrier family 12 member 9 (slc12a9), found in Danio rerio (Zebrafish).